Consider the following 356-residue polypeptide: Dihydroorotate dehydrogenase (quinone) (356 aa).

FMN is bound by residues 66–70 (AGFDK) and Thr-90. Lys-70 is a substrate binding site. 115-119 (NRMGF) lines the substrate pocket. FMN is bound by residues Asn-143 and Asn-176. A substrate-binding site is contributed by Asn-176. Residue Ser-179 is the Nucleophile of the active site. Asn-181 contacts substrate. FMN-binding residues include Lys-212 and Thr-240. 241-242 (NT) contacts substrate. FMN contacts are provided by residues Gly-266, Gly-295, and 316–317 (YT).

This sequence belongs to the dihydroorotate dehydrogenase family. Type 2 subfamily. In terms of assembly, monomer. FMN is required as a cofactor.

Its subcellular location is the cell membrane. It carries out the reaction (S)-dihydroorotate + a quinone = orotate + a quinol. The protein operates within pyrimidine metabolism; UMP biosynthesis via de novo pathway; orotate from (S)-dihydroorotate (quinone route): step 1/1. In terms of biological role, catalyzes the conversion of dihydroorotate to orotate with quinone as electron acceptor. This Rhodococcus opacus (strain B4) protein is Dihydroorotate dehydrogenase (quinone).